The following is a 333-amino-acid chain: MFRQIPKFSVIRASCFASRCFYSSKSSNATYIASLLAEYDKTTNRSKKPRLKSRNDPKPSFKGAKAKKPDRHINQTGKERDREALKVVLDEVQSKYKSNNAIVILPTGNLEETQLSKTSLTLNLDEHGLQVVGEKKDSKGRSVPLVKVVDRQTAIKNYSDYLHQQVTRKFSSSFRKAINTSNVANKDPWKVIKVSWNISPQDLASQKCNEIEQMLNKGQNVYILIGSKGVINKSIDNPEDLFNEQHKREVSLDDIEALRRQKIVDTLDSMLETLPTSSIGNDGSISDKIIYKIKAQPKKDDKDEKKRLKELKKQERQEKIRLRTEKKRAESKA.

The N-terminal 28 residues, 1-28, are a transit peptide targeting the mitochondrion; the sequence is MFRQIPKFSVIRASCFASRCFYSSKSSN. Disordered stretches follow at residues 43–80 and 296–333; these read TNRS…GKER and QPKK…ESKA. Composition is skewed to basic and acidic residues over residues 71–80 and 297–333; these read RHINQTGKER and PKKD…ESKA.

This sequence belongs to the AIM23 family.

The protein resides in the mitochondrion. This Komagataella phaffii (strain GS115 / ATCC 20864) (Yeast) protein is Altered inheritance of mitochondria protein 23, mitochondrial (AIM23).